The chain runs to 283 residues: Phosphatidylglycerol--prolipoprotein diacylglyceryl transferase (283 aa).

4 consecutive transmembrane segments (helical) span residues 17 to 37 (LAVR…TFLG), 56 to 76 (FLTW…VLFY), 92 to 112 (WEGG…IWLF), and 117 to 137 (GIGF…GLAS). Arg139 is an a 1,2-diacyl-sn-glycero-3-phospho-(1'-sn-glycerol) binding site. The next 3 membrane-spanning stretches (helical) occupy residues 194–214 (PSQL…VWLF), 222–242 (GQVA…AEFA), and 255–275 (GLSM…VGFV).

Belongs to the Lgt family.

It is found in the cell inner membrane. It catalyses the reaction L-cysteinyl-[prolipoprotein] + a 1,2-diacyl-sn-glycero-3-phospho-(1'-sn-glycerol) = an S-1,2-diacyl-sn-glyceryl-L-cysteinyl-[prolipoprotein] + sn-glycerol 1-phosphate + H(+). It participates in protein modification; lipoprotein biosynthesis (diacylglyceryl transfer). Its function is as follows. Catalyzes the transfer of the diacylglyceryl group from phosphatidylglycerol to the sulfhydryl group of the N-terminal cysteine of a prolipoprotein, the first step in the formation of mature lipoproteins. The chain is Phosphatidylglycerol--prolipoprotein diacylglyceryl transferase from Neisseria meningitidis serogroup A / serotype 4A (strain DSM 15465 / Z2491).